The sequence spans 385 residues: Chaperone protein DnaJ (385 aa).

The J domain maps to 3–68 (DYYEILGVTR…QKRAAYDRFG (66 aa)). A CR-type zinc finger spans residues 135–213 (GAEVEITVPA…CHGHGQVRRE (79 aa)). Residues Cys-148, Cys-151, Cys-165, Cys-168, Cys-187, Cys-190, Cys-201, and Cys-204 each contribute to the Zn(2+) site. CXXCXGXG motif repeat units lie at residues 148 to 155 (CEVCEGSG), 165 to 172 (CGTCGGAG), 187 to 194 (CPRCGGSG), and 201 to 208 (CSNCHGHG).

It belongs to the DnaJ family. As to quaternary structure, homodimer. The cofactor is Zn(2+).

It is found in the cytoplasm. In terms of biological role, participates actively in the response to hyperosmotic and heat shock by preventing the aggregation of stress-denatured proteins and by disaggregating proteins, also in an autonomous, DnaK-independent fashion. Unfolded proteins bind initially to DnaJ; upon interaction with the DnaJ-bound protein, DnaK hydrolyzes its bound ATP, resulting in the formation of a stable complex. GrpE releases ADP from DnaK; ATP binding to DnaK triggers the release of the substrate protein, thus completing the reaction cycle. Several rounds of ATP-dependent interactions between DnaJ, DnaK and GrpE are required for fully efficient folding. Also involved, together with DnaK and GrpE, in the DNA replication of plasmids through activation of initiation proteins. The chain is Chaperone protein DnaJ from Caulobacter vibrioides (strain ATCC 19089 / CIP 103742 / CB 15) (Caulobacter crescentus).